Reading from the N-terminus, the 181-residue chain is MFASRPVVHPLEVAAPAHPVQQPAPGVLMKDLPGMPGTPGGLGLRVLQLLFAAISLAVMSSTADFASVSAFCYLITTTVLQCVWSLTVAIVDIYALLVKRCLQNRRAVTLFSIGDGITWLVSFSGACAAAGIPVLIDADLIMCSENPCASFQTAVAMGFMCCFSLLPSFLLNFYSIASSHG.

At 1-38 (MFASRPVVHPLEVAAPAHPVQQPAPGVLMKDLPGMPGT) the chain is on the cytoplasmic side. Residues 39-59 (PGGLGLRVLQLLFAAISLAVM) form a helical membrane-spanning segment. At 60–77 (SSTADFASVSAFCYLITT) the chain is on the extracellular side. A helical membrane pass occupies residues 78–98 (TVLQCVWSLTVAIVDIYALLV). Over 99 to 115 (KRCLQNRRAVTLFSIGD) the chain is Cytoplasmic. The chain crosses the membrane as a helical span at residues 116–136 (GITWLVSFSGACAAAGIPVLI). The Extracellular portion of the chain corresponds to 137–153 (DADLIMCSENPCASFQT). Residues 154–174 (AVAMGFMCCFSLLPSFLLNFY) traverse the membrane as a helical segment. Over 175–181 (SIASSHG) the chain is Cytoplasmic.

Belongs to the Casparian strip membrane proteins (CASP) family. In terms of assembly, homodimer and heterodimers.

Its subcellular location is the cell membrane. The sequence is that of CASP-like protein 5A1 from Zea mays (Maize).